Consider the following 78-residue polypeptide: Acyl carrier protein (78 aa).

One can recognise a Carrier domain in the interval methionine 1–glutamine 76. Serine 36 carries the post-translational modification O-(pantetheine 4'-phosphoryl)serine.

This sequence belongs to the acyl carrier protein (ACP) family. In terms of processing, 4'-phosphopantetheine is transferred from CoA to a specific serine of apo-ACP by AcpS. This modification is essential for activity because fatty acids are bound in thioester linkage to the sulfhydryl of the prosthetic group.

The protein resides in the cytoplasm. It participates in lipid metabolism; fatty acid biosynthesis. Functionally, carrier of the growing fatty acid chain in fatty acid biosynthesis. In Chlamydia felis (strain Fe/C-56) (Chlamydophila felis), this protein is Acyl carrier protein.